We begin with the raw amino-acid sequence, 494 residues long: Ribitol 5-phosphate transferase FKRP (494 aa).

At 1–6 (MRLTRC) the chain is on the cytoplasmic side. The chain crosses the membrane as a helical span at residues 7-29 (WAALAAAIILNLLVFFYVSWLQH). Topologically, residues 30-494 (QPRNSRARGP…NPALLSLTGG (465 aa)) are lumenal. A disulfide bridge links C168 with C191. N-linked (GlcNAc...) asparagine glycosylation is found at N172 and N209. Residues C289, C296, C317, and C318 each contribute to the Zn(2+) site. Residues 289-318 (CSKESARCFGTVAGDTPAYLYEGRWTPPCC) are zinc finger loop. Positions 345 and 352 each coordinate CDP-L-ribitol. CDP-L-ribitol stretches follow at residues 359 to 364 (WDYDVD), 437 to 438 (QD), and 480 to 482 (NPE). Residues D360, D362, and D364 each coordinate Mg(2+).

The protein belongs to the LicD transferase family. In terms of assembly, homodimer; disulfide-linked. Forms a complex composed of FKRP, FKTN/fukutin, and RXYLT1/TMEM5. Also exists as large multimeric protein complexes. May interact with the dystrophin-glycoprotein complex (DGC). N-glycosylated. In terms of tissue distribution, expressed in the retina, specifically in the inner segments of the photoreceptors, the outer plexiform layers, inner nuclear layers, and ganglion cell layers (at protein level). Expressed at highest levels in brain, lung, heart, kidney and liver.

Its subcellular location is the golgi apparatus membrane. It is found in the secreted. The protein resides in the cell membrane. The protein localises to the sarcolemma. It localises to the rough endoplasmic reticulum. Its subcellular location is the cytoplasm. The enzyme catalyses 3-O-[Rib-ol-P-3-beta-D-GalNAc-(1-&gt;3)-beta-D-GlcNAc-(1-&gt;4)-(O-6-P-alpha-D-Man)]-Thr-[protein] + CDP-L-ribitol = 3-O-[Rib-ol-P-Rib-ol-P-3-beta-D-GalNAc-(1-&gt;3)-beta-D-GlcNAc-(1-&gt;4)-(O-6-P-alpha-D-Man)]-Thr-[protein] + CMP + H(+). It functions in the pathway protein modification; protein glycosylation. Functionally, catalyzes the transfer of CDP-ribitol to ribitol 5-phosphate previously attached by FKTN/fukutin of to the phosphorylated O-mannosyl trisaccharide (N-acetylgalactosamine-beta-3-N-acetylglucosamine-beta-4-(phosphate-6-)mannose), a carbohydrate structure present in alpha-dystroglycan (DAG1). This constitutes the second step in the formation of the ribose 5-phosphate tandem repeat which links the phosphorylated O-mannosyl trisaccharide to the ligand binding moiety composed of repeats of 3-xylosyl-alpha-1,3-glucuronic acid-beta-1. This chain is Ribitol 5-phosphate transferase FKRP, found in Mus musculus (Mouse).